The chain runs to 473 residues: Ribulose bisphosphate carboxylase large chain 1 (473 aa).

2 residues coordinate substrate: N116 and T166. K168 acts as the Proton acceptor in catalysis. Residue K170 coordinates substrate. Mg(2+) is bound by residues K194, D196, and E197. Residue K194 is modified to N6-carboxylysine. H287 functions as the Proton acceptor in the catalytic mechanism. The substrate site is built by R288, H320, and S372.

This sequence belongs to the RuBisCO large chain family. Type I subfamily. As to quaternary structure, heterohexadecamer of 8 large chains and 8 small chains. Requires Mg(2+) as cofactor.

It carries out the reaction 2 (2R)-3-phosphoglycerate + 2 H(+) = D-ribulose 1,5-bisphosphate + CO2 + H2O. The enzyme catalyses D-ribulose 1,5-bisphosphate + O2 = 2-phosphoglycolate + (2R)-3-phosphoglycerate + 2 H(+). Its function is as follows. RuBisCO catalyzes two reactions: the carboxylation of D-ribulose 1,5-bisphosphate, the primary event in carbon dioxide fixation, as well as the oxidative fragmentation of the pentose substrate. Both reactions occur simultaneously and in competition at the same active site. This is Ribulose bisphosphate carboxylase large chain 1 from Acidithiobacillus ferrooxidans (strain ATCC 23270 / DSM 14882 / CIP 104768 / NCIMB 8455) (Ferrobacillus ferrooxidans (strain ATCC 23270)).